Reading from the N-terminus, the 563-residue chain is Arginine--tRNA ligase (563 aa).

A 'HIGH' region motif is present at residues 121–131; it reads PNIAKPFSIGH.

Belongs to the class-I aminoacyl-tRNA synthetase family. Monomer.

The protein localises to the cytoplasm. It carries out the reaction tRNA(Arg) + L-arginine + ATP = L-arginyl-tRNA(Arg) + AMP + diphosphate. In Streptococcus pneumoniae serotype 4 (strain ATCC BAA-334 / TIGR4), this protein is Arginine--tRNA ligase (argS).